The sequence spans 60 residues: Ribosome modulation factor (60 aa).

The protein belongs to the ribosome modulation factor family.

The protein localises to the cytoplasm. Its function is as follows. During stationary phase, converts 70S ribosomes to an inactive dimeric form (100S ribosomes). The protein is Ribosome modulation factor of Kangiella koreensis (strain DSM 16069 / JCM 12317 / KCTC 12182 / SW-125).